A 658-amino-acid polypeptide reads, in one-letter code: Alkyldihydroxyacetonephosphate synthase, peroxisomal (658 aa).

Positions 1–24 are enriched in low complexity; that stretch reads MAEAAAAAAAAAAAGETSASSGSA. Residues 1-37 are disordered; sequence MAEAAAAAAAAAAAGETSASSGSAAERDPDQDRAGRR. The N-terminal 58 residues, 1 to 58, are a transit peptide targeting the peroxisome; that stretch reads MAEAAAAAAAAAAAGETSASSGSAAERDPDQDRAGRRLRVLSGHLLGRPQEALSTNEC. Over residues 25–35 the composition is skewed to basic and acidic residues; the sequence is AERDPDQDRAG. Residue Ser65 is modified to Phosphoserine. The residue at position 74 (Thr74) is a Phosphothreonine. Lys102 is subject to N6-acetyllysine. The FAD-binding PCMH-type domain maps to 202–384; sequence FERIPDIVLW…TEATIKIRPT (183 aa). FAD-binding positions include 234-240, 303-309, and 316-319; these read PIGGGTS, DSLEFST, and TRAS. N6-acetyllysine is present on Lys347. 368–374 is an FAD binding site; it reads EGTLGVI. Arg515 provides a ligand contact to substrate. Tyr578 functions as the Proton donor/acceptor in the catalytic mechanism. Important for enzyme activity stretches follow at residues 615-617 and 654-658; these read HHH and NRNLL.

The protein belongs to the FAD-binding oxidoreductase/transferase type 4 family. Homodimer. Requires FAD as cofactor.

It localises to the peroxisome membrane. Its subcellular location is the peroxisome. The catalysed reaction is a long chain fatty alcohol + a 1-acylglycerone 3-phosphate = a 1-O-alkylglycerone 3-phosphate + a long-chain fatty acid + H(+). The enzyme catalyses hexadecan-1-ol + 1-hexadecanoylglycerone 3-phosphate = 1-O-hexadecylglycerone 3-phosphate + hexadecanoate + H(+). It catalyses the reaction 1-hexadecanoylglycerone 3-phosphate + a long-chain fatty acid = a 1-acylglycerone 3-phosphate + hexadecanoate. It participates in glycerolipid metabolism; ether lipid biosynthesis. Inhibited by N-ethylmaleimide, p-bromophenacylbromide, 2,4- dinitrofluorobenzene and divalent cations such as such as Mn(2+), Mg(2+) and Zn(2+). Inhibition by p-bromophenacylbromide is strongly pH dependent and is highest at alkaline conditions. Its function is as follows. Catalyzes the exchange of the acyl chain in acyl-dihydroxyacetonephosphate (acyl-DHAP) for a long chain fatty alcohol, yielding the first ether linked intermediate, i.e. alkyl-dihydroxyacetonephosphate (alkyl-DHAP), in the pathway of ether lipid biosynthesis. This Cavia porcellus (Guinea pig) protein is Alkyldihydroxyacetonephosphate synthase, peroxisomal (AGPS).